The chain runs to 433 residues: Apolipoprotein L5 (433 aa).

The segment at 346–433 is disordered; that stretch reads HHRHLPQKAS…GRQAPGRHRQ (88 aa). A compositionally biased stretch (low complexity) spans 359 to 371; the sequence is SSSRGRAVRGSRV. Basic residues predominate over residues 422–433; sequence RKGRQAPGRHRQ.

This sequence belongs to the apolipoprotein L family. Low level of expression; detected in uterus, testis, skeletal muscle and stomach.

Its subcellular location is the cytoplasm. Its function is as follows. May affect the movement of lipids in the cytoplasm or allow the binding of lipids to organelles. This chain is Apolipoprotein L5 (APOL5), found in Homo sapiens (Human).